Here is a 155-residue protein sequence, read N- to C-terminus: MNALFAWTDGACSGNPGPGGWGVLMRAMDGDRMLKERELSGGEAETTNNRMELMAAISALEALTRPSEITVTTDSAYVKNGVTQWIHGWKKNGWRTADRKPVKNADLWQRLDAAQARHQVRWEWIKGHAGHPENERADELARAGMAPFKPARVSG.

The region spanning 1–146 (MNALFAWTDG…ADELARAGMA (146 aa)) is the RNase H type-1 domain. Residues aspartate 9, glutamate 52, aspartate 74, and aspartate 138 each coordinate Mg(2+).

The protein belongs to the RNase H family. Monomer. Mg(2+) is required as a cofactor.

The protein resides in the cytoplasm. The catalysed reaction is Endonucleolytic cleavage to 5'-phosphomonoester.. Endonuclease that specifically degrades the RNA of RNA-DNA hybrids. This is Ribonuclease H from Paracoccus denitrificans (strain Pd 1222).